Reading from the N-terminus, the 391-residue chain is MRTLEEVQGTLQIAKVKEEDLQPVTYCLSFGDNVSSGDYCLMEVDENLCKHIESGKSLIIRGDKDEHAVLCSEDKTYDLKIADTSNLLLFVPGCKTPDQLSDIPASPQLMHTQIWGFSNCYWELRRQRPRLKKLKKLLMENPYDGPPVGMQEEAPGLKYSMEDLLERIQASKEELEAHLGNVHACEIDGFWRILDFDYEMKLLGHVTQLVDSESWSFSKVPLSVCLEELGSLEPKAMIEHCLNCYGRRHSDEDNQVMYALDEDKVCRATAQLLLQNAVKFNLSEFQEVWQQSVPEGMGTRLDQLRGLALIDRSSKPETISLLRVEDLPEDTLERFNSLFSLREKWTQDDIEPYIQDLCGEKQTTGALLTKHARSSMQNGIKVYNSRRPVAT.

It belongs to the DCC1 family. In terms of assembly, component of the ctf18-RFC complex which consists of ctf18, ctf8, dscc1 and the RFC complex.

It localises to the nucleus. In terms of biological role, loads pcna onto primed templates regulating velocity, spacing and restart activity of replication forks. May couple DNA replication to sister chromatid cohesion. This is Sister chromatid cohesion protein DCC1 (dscc1) from Danio rerio (Zebrafish).